The chain runs to 619 residues: Interferon-activable protein 204 (619 aa).

Residues 1–88 (MVNEYKRIVL…AEILKKERSE (88 aa)) enclose the Pyrin domain. The Nuclear export signal signature appears at 24 to 35 (LFKSLLARDLNL). The span at 86 to 99 (RSEVTGETSLEKNG) shows a compositional bias: basic and acidic residues. The tract at residues 86–223 (RSEVTGETSL…QNQNIPRGAV (138 aa)) is disordered. Positions 122 to 153 (TSATQEETSTAQAGTSTAQARTSTAQAGTSTA) are enriched in low complexity. 3 tandem repeats follow at residues 134 to 140 (AGTSTAQ), 141 to 147 (ARTSTAQ), and 148 to 154 (AGTSTAQ). Residues 134–154 (AGTSTAQARTSTAQAGTSTAQ) form a 3 X 7 AA tandem repeats of A-[GR]-T-S-T-A-Q region. Positions 150–157 (TSTAQKRK) match the Nuclear localization signal motif. The span at 159–176 (MREEETGVKKSKAAKEPD) shows a compositional bias: basic and acidic residues. The segment covering 190–206 (SPILHSSSSASSNIPSA) has biased composition (low complexity). Over residues 207 to 218 (KNQKSQPQNQNI) the composition is skewed to polar residues. 2 HIN-200 domains span residues 213–413 (PQNQ…IKIS) and 417–615 (NVPK…MQVI). The interaction with ID2 stretch occupies residues 550-614 (KKTERNKFIY…RSVRHSYMQV (65 aa)).

The protein belongs to the HIN-200 family. Interacts with UBTF. Interacts with RUNX2. Interacts with ID1, ID2 and ID3. Interacts with STING. Post-translationally, acetylated upon bacterial infection, leading to translocation from nucleus to cytoplasm and subsequent recruitment of STING to activate IFN-beta production. In terms of tissue distribution, present in osteoblasts (at protein level).

Its subcellular location is the nucleus. It localises to the nucleolus. The protein resides in the cytoplasm. Interferon-stimulated protein that plays a role in several biological processes including cell differentiation, autophagy and innate immunity. Cooperates with CGAS to sense dsDNA and activates the STING-dependent type I IFN pathway. Mechanistically, gets acetylated upon bacterial infection and then translocates from nucleus into cytoplasm to recruit STING for activation of TBK1-dependent IRF3 nuclear translocation and IFN-beta release. Inhibits the transcription of ribosomal RNA. May inhibit DNA binding by UBTF. Inhibits cell growth via p53/TP53 and RB1-dependent and independent pathways. Acts as a coactivator of RUNX2 during osteogenesis. May be involved in macrophage differentiation. Enables skeletal muscle and cardiac myocyte differentiation by sequestring Id proteins in the cytosol and promoting their ubiquitination and subsequent degradation. In Mus musculus (Mouse), this protein is Interferon-activable protein 204 (Ifi204).